We begin with the raw amino-acid sequence, 159 residues long: SsrA-binding protein (159 aa).

The disordered stretch occupies residues 131–159 (KGKKLHDKRESEKERDWNRQKSRLLKDNG). The span at 137–159 (DKRESEKERDWNRQKSRLLKDNG) shows a compositional bias: basic and acidic residues.

This sequence belongs to the SmpB family.

Its subcellular location is the cytoplasm. Its function is as follows. Required for rescue of stalled ribosomes mediated by trans-translation. Binds to transfer-messenger RNA (tmRNA), required for stable association of tmRNA with ribosomes. tmRNA and SmpB together mimic tRNA shape, replacing the anticodon stem-loop with SmpB. tmRNA is encoded by the ssrA gene; the 2 termini fold to resemble tRNA(Ala) and it encodes a 'tag peptide', a short internal open reading frame. During trans-translation Ala-aminoacylated tmRNA acts like a tRNA, entering the A-site of stalled ribosomes, displacing the stalled mRNA. The ribosome then switches to translate the ORF on the tmRNA; the nascent peptide is terminated with the 'tag peptide' encoded by the tmRNA and targeted for degradation. The ribosome is freed to recommence translation, which seems to be the essential function of trans-translation. The chain is SsrA-binding protein from Rhizobium etli (strain CIAT 652).